The sequence spans 215 residues: Probable transaldolase (215 aa).

Lys-83 functions as the Schiff-base intermediate with substrate in the catalytic mechanism.

Belongs to the transaldolase family. Type 3B subfamily.

It localises to the cytoplasm. It catalyses the reaction D-sedoheptulose 7-phosphate + D-glyceraldehyde 3-phosphate = D-erythrose 4-phosphate + beta-D-fructose 6-phosphate. It participates in carbohydrate degradation; pentose phosphate pathway; D-glyceraldehyde 3-phosphate and beta-D-fructose 6-phosphate from D-ribose 5-phosphate and D-xylulose 5-phosphate (non-oxidative stage): step 2/3. In terms of biological role, transaldolase is important for the balance of metabolites in the pentose-phosphate pathway. In Clostridium acetobutylicum (strain ATCC 824 / DSM 792 / JCM 1419 / IAM 19013 / LMG 5710 / NBRC 13948 / NRRL B-527 / VKM B-1787 / 2291 / W), this protein is Probable transaldolase (tal).